The primary structure comprises 223 residues: Neurotrophic factor BDNF precursor form (223 aa).

A signal peptide spans 1 to 5; it reads SCMKA. Positions 6–114 are excised as a propeptide; the sequence is APMKEVSIRG…AANMSMRVRR (109 aa). Asn107 carries an N-linked (GlcNAc...) asparagine glycan. Disulfide bonds link Cys127–Cys194 and Cys172–Cys223.

The protein belongs to the NGF-beta family.

It localises to the secreted. In terms of biological role, promotes the survival of neuronal populations that are all located either in the central nervous system or directly connected to it. The polypeptide is Neurotrophic factor BDNF precursor form (BDNF) (Calabaria reinhardtii (Calabar boa)).